The following is a 197-amino-acid chain: Transcription factor FapR (197 aa).

Belongs to the FapR family.

Functionally, transcriptional factor involved in regulation of membrane lipid biosynthesis by repressing genes involved in fatty acid and phospholipid metabolism. This chain is Transcription factor FapR, found in Bacillus mycoides (strain KBAB4) (Bacillus weihenstephanensis).